A 346-amino-acid chain; its full sequence is Elongation factor Ts (346 aa).

An involved in Mg(2+) ion dislocation from EF-Tu region spans residues 80–83; that stretch reads TDFV.

It belongs to the EF-Ts family.

The protein localises to the cytoplasm. Associates with the EF-Tu.GDP complex and induces the exchange of GDP to GTP. It remains bound to the aminoacyl-tRNA.EF-Tu.GTP complex up to the GTP hydrolysis stage on the ribosome. This Streptococcus pyogenes serotype M3 (strain ATCC BAA-595 / MGAS315) protein is Elongation factor Ts.